The chain runs to 674 residues: Zinc finger protein 750 (674 aa).

The CCHC-type zinc finger occupies tyrosine 25–asparagine 51. The Zn(2+) site is built by cysteine 27, cysteine 30, histidine 43, and cysteine 49. 3 disordered regions span residues glutamate 105–valine 125, leucine 370–serine 466, and threonine 594–serine 674. Composition is skewed to polar residues over residues serine 401–glycine 411 and aspartate 444–serine 466.

The protein localises to the nucleus. Functionally, transcription factor involved in epidermis differentiation. The chain is Zinc finger protein 750 (znf750) from Xenopus laevis (African clawed frog).